The sequence spans 321 residues: Cytochrome c biogenesis protein CcsA (321 aa).

8 helical membrane-spanning segments follow: residues Ile17–Leu37, Lys43–Ser63, Leu71–Ile91, Leu98–Leu118, Met143–Ile163, Val225–Asn245, Glu258–Arg275, and Ala286–Leu306.

This sequence belongs to the CcmF/CycK/Ccl1/NrfE/CcsA family. As to quaternary structure, may interact with Ccs1.

It localises to the plastid. The protein resides in the chloroplast thylakoid membrane. Its function is as follows. Required during biogenesis of c-type cytochromes (cytochrome c6 and cytochrome f) at the step of heme attachment. The polypeptide is Cytochrome c biogenesis protein CcsA (Platanus occidentalis (Sycamore)).